Consider the following 115-residue polypeptide: Large ribosomal subunit protein bL20 (115 aa).

The protein belongs to the bacterial ribosomal protein bL20 family.

In terms of biological role, binds directly to 23S ribosomal RNA and is necessary for the in vitro assembly process of the 50S ribosomal subunit. It is not involved in the protein synthesizing functions of that subunit. The chain is Large ribosomal subunit protein bL20 from Prochlorococcus marinus (strain MIT 9303).